A 369-amino-acid chain; its full sequence is Dual-specificity RNA methyltransferase RlmN (369 aa).

Glutamate 94 serves as the catalytic Proton acceptor. Residues 113–346 form the Radical SAM core domain; sequence ESEKWTMCLS…CTIRESRGID (234 aa). Cysteines 120 and 351 form a disulfide. [4Fe-4S] cluster contacts are provided by cysteine 127, cysteine 131, and cysteine 134. S-adenosyl-L-methionine contacts are provided by residues 177–178, serine 209, 232–234, and asparagine 308; these read GE and SLH. Cysteine 351 acts as the S-methylcysteine intermediate in catalysis.

Belongs to the radical SAM superfamily. RlmN family. [4Fe-4S] cluster is required as a cofactor.

The protein localises to the cytoplasm. The catalysed reaction is adenosine(2503) in 23S rRNA + 2 reduced [2Fe-2S]-[ferredoxin] + 2 S-adenosyl-L-methionine = 2-methyladenosine(2503) in 23S rRNA + 5'-deoxyadenosine + L-methionine + 2 oxidized [2Fe-2S]-[ferredoxin] + S-adenosyl-L-homocysteine. It catalyses the reaction adenosine(37) in tRNA + 2 reduced [2Fe-2S]-[ferredoxin] + 2 S-adenosyl-L-methionine = 2-methyladenosine(37) in tRNA + 5'-deoxyadenosine + L-methionine + 2 oxidized [2Fe-2S]-[ferredoxin] + S-adenosyl-L-homocysteine. In terms of biological role, specifically methylates position 2 of adenine 2503 in 23S rRNA and position 2 of adenine 37 in tRNAs. m2A2503 modification seems to play a crucial role in the proofreading step occurring at the peptidyl transferase center and thus would serve to optimize ribosomal fidelity. The polypeptide is Dual-specificity RNA methyltransferase RlmN (Helicobacter hepaticus (strain ATCC 51449 / 3B1)).